We begin with the raw amino-acid sequence, 531 residues long: Beta-hexosaminidase subunit beta (531 aa).

A signal peptide spans 1 to 24 (MRHRGLGLAALLALLAAVAPRSSA). Residue asparagine 50 is glycosylated (N-linked (GlcNAc...) asparagine). Cysteine 65 and cysteine 111 are joined by a disulfide. Residues asparagine 116, asparagine 164, and asparagine 301 are each glycosylated (N-linked (GlcNAc...) asparagine). Disulfide bonds link cysteine 283-cysteine 334 and cysteine 508-cysteine 525. Glutamate 329 functions as the Proton donor in the catalytic mechanism.

This sequence belongs to the glycosyl hydrolase 20 family. There are 3 forms of beta-hexosaminidase: hexosaminidase A is a heterodimer composed of one subunit alpha and one subunit beta (chain A and B); hexosaminidase B is a homodimer of two beta subunits (two chains A and B); hexosaminidase S is a homodimer of two alpha subunits. The composition of the dimer (isozyme A versus isozyme S) has a significant effect on the substrate specificity of the alpha subunit active site.

The protein resides in the lysosome. Its subcellular location is the cytoplasmic vesicle. It localises to the secretory vesicle. The protein localises to the cortical granule. The catalysed reaction is Hydrolysis of terminal non-reducing N-acetyl-D-hexosamine residues in N-acetyl-beta-D-hexosaminides.. It carries out the reaction N-acetyl-beta-D-galactosaminyl-(1-&gt;4)-beta-D-3-sulfogalactosyl-(1-&gt;4)-beta-D-glucosyl-(1&lt;-&gt;1')-ceramide + H2O = a beta-D-3-sulfogalactosyl-(1-&gt;4)-beta-D-glucosyl-(1&lt;-&gt;1')-ceramide + N-acetyl-beta-D-galactosamine. The enzyme catalyses a ganglioside GM2 (d18:1(4E)) + H2O = a ganglioside GM3 (d18:1(4E)) + N-acetyl-beta-D-galactosamine. It catalyses the reaction a ganglioside GM2 + H2O = a ganglioside GM3 + N-acetyl-beta-D-galactosamine. The catalysed reaction is beta-D-GalNAc-(1-&gt;4)-alpha-L-IdoA-(1-&gt;3)-beta-D-GalNAc-4-sulfate-(1-&gt;4)-alpha-L-IdoA-(1-&gt;3)-D-GalNAc-4-sulfate + H2O = alpha-L-IdoA-(1-&gt;3)-beta-D-GalNAc-4-sulfate-(1-&gt;4)-alpha-L-IdoA-(1-&gt;3)-D-GalNAc-4-sulfate + N-acetyl-D-galactosamine. It carries out the reaction N-acetyl-beta-D-6-sulfogalactosaminyl-(1-&gt;4)-alpha-L-iduronyl-(1-&gt;3)-N-acetyl-D-6-sulfogalactosamine + H2O = alpha-L-iduronyl-(1-&gt;3)-N-acetyl-D-6-sulfogalactosamine + N-acetyl-D-6-sulfogalactosamine. With respect to regulation, addition of GM2A stimulates the hydrolysis of sulfated glycosphingolipid SM2 and the ganglioside GM2. Hydrolyzes the non-reducing end N-acetyl-D-hexosamine and/or sulfated N-acetyl-D-hexosamine of glycoconjugates, such as the oligosaccharide moieties from proteins and neutral glycolipids, or from certain mucopolysaccharides. The isozyme B does not hydrolyze each of these substrates, however hydrolyzes efficiently neutral oligosaccharide. Only the isozyme A is responsible for the degradation of GM2 gangliosides in the presence of GM2A. During fertilization is responsible, at least in part, for the zona block to polyspermy. Present in the cortical granules of non-activated oocytes, is exocytosed during the cortical reaction in response to oocyte activation and inactivates the sperm galactosyltransferase-binding site, accounting for the block in sperm binding to the zona pellucida. The polypeptide is Beta-hexosaminidase subunit beta (Felis catus (Cat)).